The following is a 380-amino-acid chain: 1-deoxy-D-xylulose 5-phosphate reductoisomerase (380 aa).

Residues serine 10, glycine 11, serine 12, isoleucine 13, glycine 36, lysine 37, asparagine 38, and asparagine 120 each contribute to the NADPH site. Lysine 121 contacts 1-deoxy-D-xylulose 5-phosphate. NADPH is bound at residue glutamate 122. Residue aspartate 146 coordinates Mn(2+). Serine 147, glutamate 148, serine 172, and histidine 195 together coordinate 1-deoxy-D-xylulose 5-phosphate. Glutamate 148 serves as a coordination point for Mn(2+). Glycine 201 lines the NADPH pocket. 1-deoxy-D-xylulose 5-phosphate contacts are provided by serine 208, asparagine 213, lysine 214, and glutamate 217. Glutamate 217 lines the Mn(2+) pocket.

This sequence belongs to the DXR family. Mg(2+) serves as cofactor. The cofactor is Mn(2+).

The catalysed reaction is 2-C-methyl-D-erythritol 4-phosphate + NADP(+) = 1-deoxy-D-xylulose 5-phosphate + NADPH + H(+). The protein operates within isoprenoid biosynthesis; isopentenyl diphosphate biosynthesis via DXP pathway; isopentenyl diphosphate from 1-deoxy-D-xylulose 5-phosphate: step 1/6. In terms of biological role, catalyzes the NADPH-dependent rearrangement and reduction of 1-deoxy-D-xylulose-5-phosphate (DXP) to 2-C-methyl-D-erythritol 4-phosphate (MEP). The sequence is that of 1-deoxy-D-xylulose 5-phosphate reductoisomerase from Bacillus cereus (strain Q1).